A 247-amino-acid chain; its full sequence is Probable dihydroorotate dehydrogenase B (NAD(+)), electron transfer subunit (247 aa).

The FAD-binding FR-type domain occupies 1 to 87 (MLRRVMIKET…RGPYGNGFKS (87 aa)). The [2Fe-2S] cluster site is built by cysteine 200, cysteine 205, cysteine 208, and cysteine 216.

This sequence belongs to the PyrK family. Heterotetramer of 2 PyrK and 2 PyrD type B subunits. Requires [2Fe-2S] cluster as cofactor. FAD is required as a cofactor.

Its pathway is pyrimidine metabolism; UMP biosynthesis via de novo pathway; orotate from (S)-dihydroorotate (NAD(+) route): step 1/1. Functionally, responsible for channeling the electrons from the oxidation of dihydroorotate from the FMN redox center in the PyrD type B subunit to the ultimate electron acceptor NAD(+). In Pyrococcus abyssi (strain GE5 / Orsay), this protein is Probable dihydroorotate dehydrogenase B (NAD(+)), electron transfer subunit.